Here is a 104-residue protein sequence, read N- to C-terminus: Circadian clock oscillator protein KaiB (104 aa).

The protein belongs to the KaiB family. As to quaternary structure, the KaiABC complex composition changes during the circadian cycle to control KaiC phosphorylation. Complexes KaiC(6), KaiA(2-4):KaiC(6), KaiB(6):KaiC(6) and KaiC(6):KaiB(6):KaiA(12) are among the most important forms, many form cooperatively. Undergoes a major conformational rearrangment; in the free state forms homotetramers as a dimer of dimers. When bound to the CI domain of KaiC switches to a monomeric thioredoxin-fold (KaiB(fs)). KaiB(fs) binds CikA, leading it to dephosphorylate phospho-RpaA.

Its function is as follows. Key component of the KaiABC oscillator complex, which constitutes the main circadian regulator in cyanobacteria. Complex composition changes during the circadian cycle to control KaiC phosphorylation. KaiA stimulates KaiC autophosphorylation, while KaiB sequesters KaiA, leading to KaiC autodephosphorylation. Phospho-Ser-431 KaiC accumulation triggers binding of KaiB to form the KaiB(6):KaiC(6) complex, leading to changes in output regulators CikA and SasA. KaiB switches to a thioredoxin-like fold (KaiB(fs)) when bound to KaiC. KaiB(6):KaiC(6) formation exposes a site for KaiA binding that sequesters KaiA from KaiC, making the KaiC(6):KaiB(6):KaiA(12) complex that results in KaiC autodephosphorylation. A metamorphic protein which reversibly switches between an inactive tetrameric fold and a rare, thioredoxin-like monomeric fold (KaiB(fs)). KaiB(fs) binds phospho-KaiC, KaiA and CikA. KaiA and CikA compete for binding to KaiB(fs), and KaiB(fs) and SasA compete for binding to KaiC, thus the clock oscillator and output signal pathway are tightly coupled. This chain is Circadian clock oscillator protein KaiB, found in Acaryochloris marina (strain MBIC 11017).